Here is a 378-residue protein sequence, read N- to C-terminus: Leukocyte elastase inhibitor (378 aa).

Met1 is modified (N-acetylmethionine). An N6-acetyllysine modification is found at Lys137. Ser299 is modified (phosphoserine). Residues 350–378 (DFIADHPFIFFIRHNPSSNILFLGRLSSP) are CARD-binding motif (CBM).

The protein belongs to the serpin family. Ov-serpin subfamily. Monomer. Interacts (via C-terminus) with CASP1; CASP4 (via CARD domain) and CASP5; these interactions regulate the activity of inflammatory caspases. Interacts with PRTN3. Interacts with GZMH.

Its subcellular location is the secreted. It is found in the cytoplasm. It localises to the cytolytic granule. The protein resides in the early endosome. Neutrophil serine protease inhibitor that plays an essential role in the regulation of the innate immune response, inflammation and cellular homeostasis. Acts primarily to protect the cell from proteases released in the cytoplasm during stress or infection. These proteases are important in killing microbes but when released from granules, these potent enzymes also destroy host proteins and contribute to mortality. Regulates the activity of the neutrophil proteases elastase, cathepsin G, proteinase-3, chymase, chymotrypsin, and kallikrein-3. Also acts as a potent intracellular inhibitor of GZMH by directly blocking its proteolytic activity. During inflammation, limits the activity of inflammatory caspases CASP1, CASP4 and CASP5 by suppressing their caspase-recruitment domain (CARD) oligomerization and enzymatic activation. When secreted, promotes the proliferation of beta-cells via its protease inhibitory function. Its function is as follows. May be cleaved leading to a loss of its anti-protease activity and to the appearance of an endonuclease activity. However no catalytic site was identified. The protein is Leukocyte elastase inhibitor (SERPINB1) of Sus scrofa (Pig).